We begin with the raw amino-acid sequence, 414 residues long: Isocitrate dehydrogenase [NADP] cytoplasmic (414 aa).

Ser-2 carries the post-translational modification N-acetylserine. Phosphotyrosine is present on Tyr-42. Thr-75–Thr-77 is an NADP(+) binding site. A substrate-binding site is contributed by Thr-77. Lys-81 is subject to N6-acetyllysine. NADP(+) is bound at residue Arg-82. Substrate is bound by residues Ser-94–Arg-100 and Arg-109. At Lys-126 the chain carries N6-succinyllysine. Residues Arg-132 and Lys-212 each coordinate substrate. 2 positions are modified to N6-acetyllysine: Lys-224 and Lys-233. Residue Asp-252 participates in Mn(2+) binding. Lys-260 lines the NADP(+) pocket. Mn(2+) contacts are provided by Asp-275 and Asp-279. Residue Gly-310–His-315 coordinates NADP(+). Lys-321 carries the post-translational modification N6-acetyllysine. Asn-328 is a binding site for NADP(+). The residue at position 389 (Ser-389) is a Phosphoserine. Lys-400 is modified (N6-succinyllysine).

Belongs to the isocitrate and isopropylmalate dehydrogenases family. Homodimer. It depends on Mg(2+) as a cofactor. Mn(2+) serves as cofactor. Acetylation at Lys-374 dramatically reduces catalytic activity. Expressed preferentially in corneal epithelium. Constitute approximately 13% of the total soluble bovine corneal epithelial proteins.

It is found in the cytoplasm. Its subcellular location is the cytosol. It carries out the reaction D-threo-isocitrate + NADP(+) = 2-oxoglutarate + CO2 + NADPH. In terms of biological role, catalyzes the NADP(+)-dependent oxidative decarboxylation of isocitrate (D-threo-isocitrate) to 2-ketoglutarate (2-oxoglutarate), which is required by other enzymes such as the phytanoyl-CoA dioxygenase. Plays a critical role in the generation of NADPH, an important cofactor in many biosynthesis pathways. May act as a corneal epithelial crystallin and may be involved in maintaining corneal epithelial transparency. This Bos taurus (Bovine) protein is Isocitrate dehydrogenase [NADP] cytoplasmic (IDH1).